Here is a 389-residue protein sequence, read N- to C-terminus: Dual-specificity RNA methyltransferase RlmN (389 aa).

E110 functions as the Proton acceptor in the catalytic mechanism. A Radical SAM core domain is found at 116 to 355 (EKDRATLCVS…TIVRKTRGDD (240 aa)). A disulfide bridge connects residues C123 and C360. Positions 130, 134, and 137 each coordinate [4Fe-4S] cluster. S-adenosyl-L-methionine contacts are provided by residues 184 to 185 (GE), S216, 238 to 240 (SLH), and N317. Catalysis depends on C360, which acts as the S-methylcysteine intermediate.

The protein belongs to the radical SAM superfamily. RlmN family. [4Fe-4S] cluster serves as cofactor.

The protein resides in the cytoplasm. The enzyme catalyses adenosine(2503) in 23S rRNA + 2 reduced [2Fe-2S]-[ferredoxin] + 2 S-adenosyl-L-methionine = 2-methyladenosine(2503) in 23S rRNA + 5'-deoxyadenosine + L-methionine + 2 oxidized [2Fe-2S]-[ferredoxin] + S-adenosyl-L-homocysteine. It catalyses the reaction adenosine(37) in tRNA + 2 reduced [2Fe-2S]-[ferredoxin] + 2 S-adenosyl-L-methionine = 2-methyladenosine(37) in tRNA + 5'-deoxyadenosine + L-methionine + 2 oxidized [2Fe-2S]-[ferredoxin] + S-adenosyl-L-homocysteine. Functionally, specifically methylates position 2 of adenine 2503 in 23S rRNA and position 2 of adenine 37 in tRNAs. m2A2503 modification seems to play a crucial role in the proofreading step occurring at the peptidyl transferase center and thus would serve to optimize ribosomal fidelity. This Erwinia tasmaniensis (strain DSM 17950 / CFBP 7177 / CIP 109463 / NCPPB 4357 / Et1/99) protein is Dual-specificity RNA methyltransferase RlmN.